The primary structure comprises 147 residues: Hemoglobin subunit beta (147 aa).

One can recognise a Globin domain in the interval 2 to 147; sequence DWTDAERAAI…VVSALGRQYH (146 aa). Positions 63 and 92 each coordinate heme b.

Belongs to the globin family. As to quaternary structure, heterotetramer of two alpha chains and two beta chains. In terms of tissue distribution, red blood cells.

In terms of biological role, involved in oxygen transport from gills to the various peripheral tissues. This Leiostomus xanthurus (Spot) protein is Hemoglobin subunit beta (hbb).